A 409-amino-acid polypeptide reads, in one-letter code: Autophagy-related protein 37 (409 aa).

Over 1-313 the chain is Cytoplasmic; sequence MSESIDRVFV…LKLIKTVIKH (313 aa). The 99-residue stretch at 5 to 103 folds into the ACB domain; sequence IDRVFVKAIG…LIDTMKQFAS (99 aa). The chain crosses the membrane as a helical span at residues 314 to 334; the sequence is VAIDAVIIAVLVAVIKRSIII. At 335 to 409 the chain is on the peroxisomal side; that stretch reads PNLISNEISL…VSRIRLIKRN (75 aa).

The protein belongs to the ATG37 family. As to quaternary structure, interacts with ATG30 and PEX3. Phosphorylated.

The protein localises to the peroxisome membrane. In terms of biological role, acyl-CoA binding protein which acts as the peroxisome receptor for pexophagy. Required for both micropexophagy and macropexophagy, but not for the cytoplasm to vacuole transport (Cvt) or autophagy pathways. Required for functional micropexophagic apparatus (MIPA) and relocation of ATG11 to the peroxisome-sequestering arms of the vacuole. Binds palmitoyl-CoA but not oleyl-CoA. This is Autophagy-related protein 37 from Komagataella phaffii (strain GS115 / ATCC 20864) (Yeast).